A 43-amino-acid chain; its full sequence is Bacteriocin leucocin-C (43 aa).

A disulfide bridge connects residues Cys9 and Cys14.

The protein localises to the secreted. Inhibits a wide spectrum of lactic acid bacteria. The sequence is that of Bacteriocin leucocin-C from Leuconostoc mesenteroides.